The chain runs to 725 residues: Malate synthase G 2 (725 aa).

Residues Val-118, 125–126, Ser-276, and Arg-313 contribute to the acetyl-CoA site; that span reads RY. Arg-340 acts as the Proton acceptor in catalysis. Residues Arg-340, Glu-429, and 454 to 457 contribute to the glyoxylate site; that span reads GFLD. Mg(2+) is bound by residues Glu-429 and Asp-457. Acetyl-CoA is bound at residue Pro-538. Position 619 is a cysteine sulfenic acid (-SOH) (Cys-619). Residue Asp-633 is the Proton donor of the active site.

Belongs to the malate synthase family. GlcB subfamily. Monomer. It depends on Mg(2+) as a cofactor.

Its subcellular location is the cytoplasm. It carries out the reaction glyoxylate + acetyl-CoA + H2O = (S)-malate + CoA + H(+). Its pathway is carbohydrate metabolism; glyoxylate cycle; (S)-malate from isocitrate: step 2/2. In terms of biological role, involved in the glycolate utilization. Catalyzes the condensation and subsequent hydrolysis of acetyl-coenzyme A (acetyl-CoA) and glyoxylate to form malate and CoA. The polypeptide is Malate synthase G 2 (Pseudomonas syringae pv. tomato (strain ATCC BAA-871 / DC3000)).